A 505-amino-acid chain; its full sequence is Structural protein 27 (505 aa).

3 hydrophobic regions span residues 20–40 (VSLI…FSPV), 423–443 (MKGI…MSTI), and 470–490 (IGLG…LILV).

The protein localises to the virion. In His1 virus (isolate Australia/Victoria) (His1V), this protein is Structural protein 27.